Here is a 138-residue protein sequence, read N- to C-terminus: Phosphoribosyl-AMP cyclohydrolase (138 aa).

Asp-86 provides a ligand contact to Mg(2+). A Zn(2+)-binding site is contributed by Cys-87. Asp-88 and Asp-90 together coordinate Mg(2+). The Zn(2+) site is built by Cys-104 and Cys-111.

This sequence belongs to the PRA-CH family. In terms of assembly, homodimer. Mg(2+) serves as cofactor. It depends on Zn(2+) as a cofactor.

It is found in the cytoplasm. The catalysed reaction is 1-(5-phospho-beta-D-ribosyl)-5'-AMP + H2O = 1-(5-phospho-beta-D-ribosyl)-5-[(5-phospho-beta-D-ribosylamino)methylideneamino]imidazole-4-carboxamide. It functions in the pathway amino-acid biosynthesis; L-histidine biosynthesis; L-histidine from 5-phospho-alpha-D-ribose 1-diphosphate: step 3/9. Catalyzes the hydrolysis of the adenine ring of phosphoribosyl-AMP. This is Phosphoribosyl-AMP cyclohydrolase from Marinobacter nauticus (strain ATCC 700491 / DSM 11845 / VT8) (Marinobacter aquaeolei).